The following is a 90-amino-acid chain: uncharacterized protein (90 aa).

An N-terminal signal peptide occupies residues 1–18; the sequence is MSRALFAVVLAFPLIALA.

This is an uncharacterized protein from Escherichia coli (strain K12).